The sequence spans 263 residues: Translation initiation factor 2 subunit alpha (263 aa).

The region spanning 12-83 is the S1 motif domain; the sequence is GEILIATVKQ…RKGTIDVSLK (72 aa).

The protein belongs to the eIF-2-alpha family. Heterotrimer composed of an alpha, a beta and a gamma chain.

Functionally, eIF-2 functions in the early steps of protein synthesis by forming a ternary complex with GTP and initiator tRNA. This is Translation initiation factor 2 subunit alpha from Sulfurisphaera tokodaii (strain DSM 16993 / JCM 10545 / NBRC 100140 / 7) (Sulfolobus tokodaii).